The primary structure comprises 252 residues: Ubiquinone/menaquinone biosynthesis C-methyltransferase UbiE (252 aa).

S-adenosyl-L-methionine is bound by residues T71, D100, 124–125 (DA), and S141.

It belongs to the class I-like SAM-binding methyltransferase superfamily. MenG/UbiE family.

It carries out the reaction a 2-demethylmenaquinol + S-adenosyl-L-methionine = a menaquinol + S-adenosyl-L-homocysteine + H(+). The enzyme catalyses a 2-methoxy-6-(all-trans-polyprenyl)benzene-1,4-diol + S-adenosyl-L-methionine = a 5-methoxy-2-methyl-3-(all-trans-polyprenyl)benzene-1,4-diol + S-adenosyl-L-homocysteine + H(+). Its pathway is quinol/quinone metabolism; menaquinone biosynthesis; menaquinol from 1,4-dihydroxy-2-naphthoate: step 2/2. It participates in cofactor biosynthesis; ubiquinone biosynthesis. In terms of biological role, methyltransferase required for the conversion of demethylmenaquinol (DMKH2) to menaquinol (MKH2) and the conversion of 2-polyprenyl-6-methoxy-1,4-benzoquinol (DDMQH2) to 2-polyprenyl-3-methyl-6-methoxy-1,4-benzoquinol (DMQH2). This is Ubiquinone/menaquinone biosynthesis C-methyltransferase UbiE from Caulobacter sp. (strain K31).